Consider the following 212-residue polypeptide: Kynurenine formamidase (212 aa).

Substrate is bound at residue Trp-17. His-48, His-52, and Asp-54 together coordinate Zn(2+). His-58 acts as the Proton donor/acceptor in catalysis. Zn(2+)-binding residues include His-161 and Glu-173.

The protein belongs to the Cyclase 1 superfamily. KynB family. Homodimer. The cofactor is Zn(2+).

The catalysed reaction is N-formyl-L-kynurenine + H2O = L-kynurenine + formate + H(+). It functions in the pathway amino-acid degradation; L-tryptophan degradation via kynurenine pathway; L-kynurenine from L-tryptophan: step 2/2. Its function is as follows. Catalyzes the hydrolysis of N-formyl-L-kynurenine to L-kynurenine, the second step in the kynurenine pathway of tryptophan degradation. The protein is Kynurenine formamidase of Salinibacter ruber (strain DSM 13855 / M31).